The following is a 357-amino-acid chain: Trans-acting factor B (357 aa).

Residues 226 to 257 (DDNDLEEEERNASGEQTTTAREESEALDTTSN) form a disordered region.

Its function is as follows. Plasmid partition require REP1, REP2, and a cis-acting DNA sequence (known as STB). REP1 may act by intercalating in the yeast nuclear matrix and binding STB either directly or via REP2. This Zygosaccharomyces bailii protein is Trans-acting factor B (B).